The chain runs to 325 residues: Syntaxin-16 (325 aa).

Residues 1 to 301 lie on the Cytoplasmic side of the membrane; it reads MATRRLTDAF…AEQYQKKNRK (301 aa). Ser-41 bears the Phosphoserine mark. In terms of domain architecture, t-SNARE coiled-coil homology spans 230 to 292; sequence TLMVEERERE…EDGLKQLHKA (63 aa). Residues 302–322 form a helical; Anchor for type IV membrane protein membrane-spanning segment; the sequence is MLVILILFVIIIVLIVVLVGV. The Vesicular segment spans residues 323–325; it reads KSR.

It belongs to the syntaxin family. As to quaternary structure, interacts with GCC2. Interacts with BAIAP3; this interaction is increased in the presence of calcium. In terms of tissue distribution, ubiquitous.

It localises to the golgi apparatus membrane. The protein resides in the cytoplasm. SNARE involved in vesicular transport from the late endosomes to the trans-Golgi network. This chain is Syntaxin-16 (STX16), found in Homo sapiens (Human).